The following is a 201-amino-acid chain: Holliday junction branch migration complex subunit RuvA (201 aa).

The tract at residues 1-63 (MIEYIKGEIA…EDAYVLYGFA (63 aa)) is domain I. The interval 64-142 (DKQERELFLL…TGAMAATAVG (79 aa)) is domain II. Residues 143–153 (GAAGALLPAMN) are flexible linker. The segment at 153 to 201 (NAEVQEEAIAALTMLGFAAAPSQKAVLAILKEEPDAPVEKVIKLALKRL) is domain III.

It belongs to the RuvA family. In terms of assembly, homotetramer. Forms an RuvA(8)-RuvB(12)-Holliday junction (HJ) complex. HJ DNA is sandwiched between 2 RuvA tetramers; dsDNA enters through RuvA and exits via RuvB. An RuvB hexamer assembles on each DNA strand where it exits the tetramer. Each RuvB hexamer is contacted by two RuvA subunits (via domain III) on 2 adjacent RuvB subunits; this complex drives branch migration. In the full resolvosome a probable DNA-RuvA(4)-RuvB(12)-RuvC(2) complex forms which resolves the HJ.

Its subcellular location is the cytoplasm. In terms of biological role, the RuvA-RuvB-RuvC complex processes Holliday junction (HJ) DNA during genetic recombination and DNA repair, while the RuvA-RuvB complex plays an important role in the rescue of blocked DNA replication forks via replication fork reversal (RFR). RuvA specifically binds to HJ cruciform DNA, conferring on it an open structure. The RuvB hexamer acts as an ATP-dependent pump, pulling dsDNA into and through the RuvAB complex. HJ branch migration allows RuvC to scan DNA until it finds its consensus sequence, where it cleaves and resolves the cruciform DNA. The polypeptide is Holliday junction branch migration complex subunit RuvA (Bacteroides fragilis (strain ATCC 25285 / DSM 2151 / CCUG 4856 / JCM 11019 / LMG 10263 / NCTC 9343 / Onslow / VPI 2553 / EN-2)).